The primary structure comprises 273 residues: Salivary glue protein Sgs-3 (273 aa).

The N-terminal stretch at 1 to 23 (MKLTIAISLASILLLSVAHVAQG) is a signal peptide. Over residues 47–57 (TTTTTTTTCAP) the composition is skewed to low complexity. A disordered region spans residues 47–225 (TTTTTTTTCA…TPKPTNKPGC (179 aa)). Pro residues predominate over residues 58-67 (PTRPPPPPCT). The span at 83–225 (RRTTTTTRQT…TPKPTNKPGC (143 aa)) shows a compositional bias: low complexity.

The sequence is that of Salivary glue protein Sgs-3 (Sgs3) from Drosophila yakuba (Fruit fly).